We begin with the raw amino-acid sequence, 951 residues long: PE-PGRS family protein PE_PGRS3 (951 aa).

The PE domain maps to Val4–Ala94. Over residues Cys887–Ala919 the composition is skewed to basic residues. The tract at residues Cys887–Pro951 is disordered.

This sequence belongs to the mycobacterial PE family. PGRS subfamily.

It is found in the cell outer membrane. The protein localises to the secreted. The protein resides in the cell wall. It localises to the cell surface. The arginine-rich C-terminal region protrudes from the mycobacterial membrane and mediates M.tuberculosis entry into host epithelial cells. May serve as a bridge between mycobacteria and host cells by interacting with specific host phospholipids and extracting them from host cells, for their direct integration or as a source of phosphate, during phases of TB pathogenesis when M.tuberculosis is short of phosphate supply. The chain is PE-PGRS family protein PE_PGRS3 (PE_PGRS3) from Mycobacterium tuberculosis (strain CDC 1551 / Oshkosh).